Here is a 245-residue protein sequence, read N- to C-terminus: Proteasome subunit alpha type-7-1B (245 aa).

It belongs to the peptidase T1A family. As to quaternary structure, the 26S proteasome consists of a 20S proteasome core and two 19S regulatory subunits. The 20S proteasome core is composed of 28 subunits that are arranged in four stacked rings, resulting in a barrel-shaped structure. The two end rings are each formed by seven alpha subunits, and the two central rings are each formed by seven beta subunits. The catalytic chamber with the active sites is on the inside of the barrel. Testis specific.

The protein resides in the cytoplasm. It is found in the nucleus. Its function is as follows. The proteasome is a multicatalytic proteinase complex which is characterized by its ability to cleave peptides with Arg, Phe, Tyr, Leu, and Glu adjacent to the leaving group at neutral or slightly basic pH. The proteasome has an ATP-dependent proteolytic activity. The polypeptide is Proteasome subunit alpha type-7-1B (Pros28.1B) (Drosophila virilis (Fruit fly)).